The following is an 88-amino-acid chain: MIKIRLSRHGMKKKPFYQIIIANVRSSRNGKFIERVGFFNPFAKKNEEKIRISTKRIQYWLEKGAKKTNRIKNLLIQFKKISSNNIKI.

The protein belongs to the bacterial ribosomal protein bS16 family.

The sequence is that of Small ribosomal subunit protein bS16 from Buchnera aphidicola subsp. Cinara cedri (strain Cc).